The chain runs to 133 residues: Exonuclease VapC9 (133 aa).

One can recognise a PINc domain in the interval 5-113 (YLVDASALYA…LVLVTQDREL (109 aa)). The Mg(2+) site is built by aspartate 8, aspartate 92, and aspartate 110.

Belongs to the PINc/VapC protein family. As to quaternary structure, homodimer, 2 of which then form a homotetramer. Mg(2+) is required as a cofactor.

With respect to regulation, inhibited by EDTA. Toxic component of a type II toxin-antitoxin (TA) system. Its function is as follows. Has ribonuclease activity. Has a slow ssDNA exonuclease activity. This is Exonuclease VapC9 from Pyrobaculum aerophilum (strain ATCC 51768 / DSM 7523 / JCM 9630 / CIP 104966 / NBRC 100827 / IM2).